We begin with the raw amino-acid sequence, 365 residues long: UPF0324 membrane protein Cj0999c (365 aa).

11 helical membrane passes run 12–34 (IVRS…MYLS), 44–63 (HLAA…PWFF), 83–100 (LGIV…LLSV), 105–127 (FLLS…TKIF), 134–153 (SMLV…LALE), 163–185 (GILA…PIAF), 197–219 (AMGV…AEMA), 234–256 (VIIK…YFFA), 269–288 (SITI…LNTY), 303–325 (IISL…LGLQ), and 338–360 (VFGL…TLAF).

This sequence belongs to the UPF0324 family.

Its subcellular location is the cell membrane. The protein is UPF0324 membrane protein Cj0999c of Campylobacter jejuni subsp. jejuni serotype O:2 (strain ATCC 700819 / NCTC 11168).